We begin with the raw amino-acid sequence, 504 residues long: L-carnitine/gamma-butyrobetaine antiporter (504 aa).

Transmembrane regions (helical) follow at residues 10–30, 51–71, 92–112, 143–163, 195–215, 231–251, 263–283, 316–336, 347–367, 398–418, 446–466, and 475–495; these read IEPK…WLTV, WGWA…WLVF, IFMM…SIEI, GPLP…FFFV, FYLV…TPLV, LDAI…ACGL, SYLS…SFIM, WTVF…IFLA, LCFG…TVLG, WAAL…CFIA, LLVR…LLAL, and AIIA…LSFI.

This sequence belongs to the BCCT transporter (TC 2.A.15) family. CaiT subfamily. As to quaternary structure, homotrimer.

It localises to the cell inner membrane. It catalyses the reaction 4-(trimethylamino)butanoate(in) + (R)-carnitine(out) = 4-(trimethylamino)butanoate(out) + (R)-carnitine(in). The protein operates within amine and polyamine metabolism; carnitine metabolism. Catalyzes the exchange of L-carnitine for gamma-butyrobetaine. The chain is L-carnitine/gamma-butyrobetaine antiporter from Escherichia coli O157:H7.